We begin with the raw amino-acid sequence, 415 residues long: MDFISELKKRNIIKQISNEEKLALALKNQKGVYVGFDPSGESLHLGNLIPIIVLRYLKKVGFKTYAILGGATGLIGDPSGKTSERKVQDYEKITANANKIKVQLERYTQAKIINNIDFYQNMNLLNFLRDTGKLINIGYLLDKEFIRSRIENGISYAEFSYNIIQGHDFLHLYEQYDVQVQCGGSDQWGNITTGIDMIKRKYGEEKTPYLCGLTFNLLLNPNGNKFGKSEQGALYLDENLTHPYLIWQYIYNQDDQFIIDLIHRYVLDQSLEQLQELIEAHLANKKTRIAQKFLADYLVKFIHSQEHLDTVHKMNKALFDNQLDQLSDQEKLVVFASFDKVELDRNQSFMVIDFLLQAKVADSKRILRELIAQGSIQIDDLKITDPQAQLNVRKDQQLTVIKKGKKNYFIVVWKG.

Tyr-33 provides a ligand contact to L-tyrosine. The short motif at 38–47 (PSGESLHLGN) is the 'HIGH' region element. L-tyrosine contacts are provided by Tyr-161 and Gln-165. Positions 225–229 (KFGKS) match the 'KMSKS' region motif. Lys-228 is an ATP binding site. Positions 350–414 (MVIDFLLQAK…KKNYFIVVWK (65 aa)) constitute an S4 RNA-binding domain.

It belongs to the class-I aminoacyl-tRNA synthetase family. TyrS type 1 subfamily. In terms of assembly, homodimer.

The protein localises to the cytoplasm. The enzyme catalyses tRNA(Tyr) + L-tyrosine + ATP = L-tyrosyl-tRNA(Tyr) + AMP + diphosphate + H(+). In terms of biological role, catalyzes the attachment of tyrosine to tRNA(Tyr) in a two-step reaction: tyrosine is first activated by ATP to form Tyr-AMP and then transferred to the acceptor end of tRNA(Tyr). The protein is Tyrosine--tRNA ligase of Mycoplasmoides gallisepticum (strain R(low / passage 15 / clone 2)) (Mycoplasma gallisepticum).